The following is a 590-amino-acid chain: MSQDSKPSKANAGAVVEPSNFLRQIIDHDLASGAFSQRTNLAGEAIPSIITRFPPEPNGYLHIGHAKSICLNFGLASDYNNQPGGARCNMRLDDTNPVKEDVEYADSILDAVKWLGFDWGTHLYHASDYFDRLYEFAEILIQSGKAYVDSQSADDIHTNRGNFGQAGKNSPFRDRTPEENLQLFRDMRDGKFKDGEHVLRLKIDMAHPNIVMRDPVVYRIRHTDHHRTGSKWCIYPLYDFTHCISDALENISHSICTLEFENNRPLYDWIVNSLKELGVFKDPVPHQHEFARLNLTYTITSKRKLLQLVEEKHVEGWDDPRMPTIVGIRRRGYTPESIRLFCERIGVSKADSWIDMSTLDQALRDDLEVRAPRATAVLKPLKLVVENFDAPTKEACSAPRHPNYPEWGNREFNFTRELWIEADDFMQEPIKGFFRLYPPIDDQPGSRVRLRHGFVVECTGFETDAQGNVTQVNVTHFPDSKSGTPGSNNYKVKGNIHWISAAEAIPAEVRLYDHLFTDPYPDSGDKNFLDAINPNSKQTISAYLEPCMKDAKAEDRFQFERHGYFVADQSDSKPGKPIFNRAVGLKDSWK.

The 'HIGH' region motif lies at 55–65 (PEPNGYLHIGH). ATP-binding positions include 56–58 (EPN) and 62–68 (HIGHAKS). Residues aspartate 93 and tyrosine 238 each contribute to the L-glutamine site. Residues threonine 257 and 292–293 (RL) each bind ATP. The 'KMSKS' region signature appears at 299 to 303 (ITSKR).

Belongs to the class-I aminoacyl-tRNA synthetase family. Monomer.

It localises to the cytoplasm. It carries out the reaction tRNA(Gln) + L-glutamine + ATP = L-glutaminyl-tRNA(Gln) + AMP + diphosphate. The sequence is that of Glutamine--tRNA ligase from Polynucleobacter necessarius subsp. necessarius (strain STIR1).